The primary structure comprises 147 residues: Hemoglobin subunit epsilon (147 aa).

One can recognise a Globin domain in the interval 3-147 (HFTAEEKATV…VANALAHKYH (145 aa)). Phosphoserine is present on residues Ser-14 and Ser-51. Heme b is bound by residues His-64 and His-93.

The protein belongs to the globin family. In terms of assembly, heterotetramer of two alpha chains and two epsilon chains in early embryonic hemoglobin Gower-2; two zeta chains and two epsilon chains in early embryonic hemoglobin Gower-1. As to expression, red blood cells.

In terms of biological role, the epsilon chain is a beta-type chain of early mammalian embryonic hemoglobin. The chain is Hemoglobin subunit epsilon (HBE1) from Bradypus tridactylus (Pale-throated three-toed sloth).